Here is a 539-residue protein sequence, read N- to C-terminus: Phosphoenolpyruvate carboxykinase (ATP) (539 aa).

Positions 59, 200, and 206 each coordinate substrate. Residues K206, H225, and 242–250 each bind ATP; that span reads GLSGTGKTT. K206 and H225 together coordinate Mn(2+). D263 provides a ligand contact to Mn(2+). Residues E291, R327, 447 to 448, and T453 contribute to the ATP site; that span reads RI. R327 is a binding site for substrate.

This sequence belongs to the phosphoenolpyruvate carboxykinase (ATP) family. Mn(2+) serves as cofactor.

It is found in the cytoplasm. The catalysed reaction is oxaloacetate + ATP = phosphoenolpyruvate + ADP + CO2. It functions in the pathway carbohydrate biosynthesis; gluconeogenesis. Functionally, involved in the gluconeogenesis. Catalyzes the conversion of oxaloacetate (OAA) to phosphoenolpyruvate (PEP) through direct phosphoryl transfer between the nucleoside triphosphate and OAA. The sequence is that of Phosphoenolpyruvate carboxykinase (ATP) from Selenomonas ruminantium.